A 199-amino-acid chain; its full sequence is 5'-deoxynucleotidase ESA_00928 (199 aa).

Substrate-binding positions include 18–19 (RW) and H33. Positions 30–142 (VSEHSLQVAM…VKQADALCAY (113 aa)) constitute an HD domain. Residues H33, H68, and D69 each contribute to the a divalent metal cation site. Substrate contacts are provided by residues D69, 77–80 (DLPT), and D137. D137 serves as a coordination point for a divalent metal cation.

This sequence belongs to the 5DNU family. In terms of assembly, homodimer. The cofactor is a divalent metal cation.

Its subcellular location is the cytoplasm. It carries out the reaction a 2'-deoxyribonucleoside 5'-phosphate + H2O = a 2'-deoxyribonucleoside + phosphate. Functionally, catalyzes the strictly specific dephosphorylation of 2'-deoxyribonucleoside 5'-monophosphates. The chain is 5'-deoxynucleotidase ESA_00928 from Cronobacter sakazakii (strain ATCC BAA-894) (Enterobacter sakazakii).